The chain runs to 335 residues: NAC domain-containing protein 40 (335 aa).

Residues 14–156 (LFPGFRFSPT…ALVVCRLRKN (143 aa)) enclose the NAC domain. A DNA-binding region spans residues 112–162 (VGTKRTLVFHIGRAPRGERTEWIMHEYCIHGAPQDALVVCRLRKNADFRAS). Over residues 245 to 254 (PTNPTHQETI) the composition is skewed to polar residues. The tract at residues 245-267 (PTNPTHQETISSESSSKRSKCGI) is disordered. The chain crosses the membrane as a helical span at residues 313–333 (VLATTVFLAILFSFFWTVLIA).

Proteolytically cleaved, probably by metalloprotease activity. This cleavage mediates a translocation from the plasma membrane to the nucleus. As to expression, expressed in seeds, leaves, roots and inflorescence. Expressed in roots, rosette leaves, cauline leaves, shoot apex, stems and flowers.

It localises to the cell membrane. Its subcellular location is the nucleus. Transcriptional activator activated by proteolytic cleavage through regulated intramembrane proteolysis (RIP), probably via metalloprotease activity. Regulates gibberellic acid-mediated salt-responsive repression of seed germination and flowering via FT, thus delaying seed germination under high salinity conditions. This Arabidopsis thaliana (Mouse-ear cress) protein is NAC domain-containing protein 40.